The sequence spans 290 residues: Protein SSO1 (290 aa).

Topologically, residues 1-265 are cytoplasmic; it reads MSYNNPYQLE…ARKARKNKIR (265 aa). The t-SNARE coiled-coil homology domain occupies 190-252; that stretch reads LAEVQARHQE…EQGVGHTDKA (63 aa). Residues 266-287 traverse the membrane as a helical; Anchor for type IV membrane protein segment; that stretch reads CWLIVFAIIVVVVVVVVVPAVV. Residues 288–290 are Extracellular-facing; sequence KTR.

Belongs to the syntaxin family.

It is found in the membrane. Required for vesicle fusion with the plasma membrane. This is Protein SSO1 (SSO1) from Saccharomyces cerevisiae (strain ATCC 204508 / S288c) (Baker's yeast).